The following is a 418-amino-acid chain: Gamma-glutamyl phosphate reductase (418 aa).

Belongs to the gamma-glutamyl phosphate reductase family.

It is found in the cytoplasm. The enzyme catalyses L-glutamate 5-semialdehyde + phosphate + NADP(+) = L-glutamyl 5-phosphate + NADPH + H(+). It functions in the pathway amino-acid biosynthesis; L-proline biosynthesis; L-glutamate 5-semialdehyde from L-glutamate: step 2/2. Catalyzes the NADPH-dependent reduction of L-glutamate 5-phosphate into L-glutamate 5-semialdehyde and phosphate. The product spontaneously undergoes cyclization to form 1-pyrroline-5-carboxylate. The sequence is that of Gamma-glutamyl phosphate reductase from Citrifermentans bemidjiense (strain ATCC BAA-1014 / DSM 16622 / JCM 12645 / Bem) (Geobacter bemidjiensis).